The primary structure comprises 477 residues: Ribosomal RNA small subunit methyltransferase F (477 aa).

S-adenosyl-L-methionine is bound by residues 125 to 131 (AAAPGSK), Glu-149, Asp-176, and Asp-194. Cys-247 acts as the Nucleophile in catalysis.

Belongs to the class I-like SAM-binding methyltransferase superfamily. RsmB/NOP family.

It is found in the cytoplasm. It carries out the reaction cytidine(1407) in 16S rRNA + S-adenosyl-L-methionine = 5-methylcytidine(1407) in 16S rRNA + S-adenosyl-L-homocysteine + H(+). In terms of biological role, specifically methylates the cytosine at position 1407 (m5C1407) of 16S rRNA. The sequence is that of Ribosomal RNA small subunit methyltransferase F from Klebsiella pneumoniae (strain 342).